The sequence spans 360 residues: Teichoic acids export ATP-binding protein TagH (360 aa).

An ABC transporter domain is found at 24–245; that stretch reads LKAMFFPKTR…YEDYINWFNK (222 aa). ATP is bound at residue 59–66; the sequence is GINGSGKS. The tract at residues 246–360 is unknown; sequence LSKEEKEAHK…GDIDNSDVSL (115 aa). The disordered stretch occupies residues 270-290; that stretch reads EEQENGKAGSGGDGTQPIVQP.

Belongs to the ABC transporter superfamily. Teichoic acids exporter (TC 3.A.1.104.1) family. As to quaternary structure, the complex is composed of two ATP-binding proteins (TagH) and two transmembrane proteins (TagG).

It localises to the cell membrane. The catalysed reaction is ATP + H2O + teichoic acidSide 1 = ADP + phosphate + teichoic acidSide 2.. In terms of biological role, part of the ABC transporter complex TagGH involved in teichoic acids export. Responsible for energy coupling to the transport system. This is Teichoic acids export ATP-binding protein TagH from Shouchella clausii (strain KSM-K16) (Alkalihalobacillus clausii).